The following is a 369-amino-acid chain: Endophilin-A (369 aa).

Positions 18 to 248 (TEKMGGAEGT…LQEKRAEAES (231 aa)) constitute a BAR domain. Residues 227–249 (QCADVLRGLQETLQEKRAEAESR) are a coiled coil. Positions 275–294 (GTPSHISSSASPLPSPMRSP) are enriched in low complexity. The disordered stretch occupies residues 275–297 (GTPSHISSSASPLPSPMRSPAKS). The region spanning 305-364 (QQQPCCQALYDFDPENPGELGFKENDIITLLNRVDDNWYEGAVNGRTGYFPQSYVQVQVP) is the SH3 domain.

The protein belongs to the endophilin family.

The protein resides in the cytoplasm. Its subcellular location is the membrane. Required presynaptically at the neuromuscular junction. Implicated in synaptic vesicle endocytosis. The polypeptide is Endophilin-A (Drosophila virilis (Fruit fly)).